A 353-amino-acid chain; its full sequence is DNA-directed RNA polymerase subunit alpha (353 aa).

The interval 1-226 (MLISQRPTLT…ELFGLARELN (226 aa)) is alpha N-terminal domain (alpha-NTD). The alpha C-terminal domain (alpha-CTD) stretch occupies residues 241–353 (ADHIASFGLP…TEDYAETEQL (113 aa)). The disordered stretch occupies residues 326-353 (ATGTWSDTDAGSFGDAEGTEDYAETEQL). Residues 342–353 (EGTEDYAETEQL) show a composition bias toward acidic residues.

The protein belongs to the RNA polymerase alpha chain family. In terms of assembly, homodimer. The RNAP catalytic core consists of 2 alpha, 1 beta, 1 beta' and 1 omega subunit. When a sigma factor is associated with the core the holoenzyme is formed, which can initiate transcription.

It carries out the reaction RNA(n) + a ribonucleoside 5'-triphosphate = RNA(n+1) + diphosphate. Its function is as follows. DNA-dependent RNA polymerase catalyzes the transcription of DNA into RNA using the four ribonucleoside triphosphates as substrates. This is DNA-directed RNA polymerase subunit alpha from Rhodococcus jostii (strain RHA1).